The primary structure comprises 531 residues: High-affinity glucose transporter ght2 (531 aa).

Residues 5–13 (RGKNFTLVM) are Cytoplasmic-facing. Residues 14–34 (LIFVSMAGWMFGADTGSIGGV) form a helical membrane-spanning segment. Residues 35-62 (TSMRDFRERYADRYDPITDQYSLSSARQ) are Extracellular-facing. Residues 63–83 (GLLTGMVNVGSLFGCIISSPI) form a helical membrane-spanning segment. The Cytoplasmic segment spans residues 84–91 (ADRFGKRL). The helical transmembrane segment at 92–112 (SIIGFCAVYIIGIIVQVTAVP) threads the bilayer. Over 113–116 (SWVQ) the chain is Extracellular. A helical transmembrane segment spans residues 117-137 (IMVAKIWTGIGIGALSVLAPG). Residues 138 to 148 (YQSETAPPSIR) lie on the Cytoplasmic side of the membrane. The helical transmembrane segment at 149-169 (GTVVVTYQLFVTGGIFIAACI) threads the bilayer. Over 170 to 183 (NMGTHKLHKTAQWR) the chain is Extracellular. Residues 184–204 (VSIGINLLWGIITMIGILFLP) form a helical membrane-spanning segment. The Cytoplasmic portion of the chain corresponds to 205–270 (ESPRYLIQVG…IFGKDIRYRT (66 aa)). Residues 271–289 (FLGMFVMSLQQLTGNNYFF) form a helical membrane-spanning segment. Residues 290–305 (YYGFSVMQGAGINSPY) are Extracellular-facing. A helical membrane pass occupies residues 306 to 326 (LSAMILDAVNFGCTFGGMYVL). Residues 327–332 (ERFGRR) are Cytoplasmic-facing. A helical transmembrane segment spans residues 333–353 (NPLIIGGIWQSICFFIYSAVG). Topologically, residues 354-367 (SRALYHKNGTSNTR) are extracellular. Residue asparagine 361 is glycosylated (N-linked (GlcNAc...) asparagine). Residues 368–388 (AGAVMIVMACLFIFGFAQTWA) form a helical membrane-spanning segment. Over 389–408 (PAAYVIVGESYPVRYRSKCA) the chain is Cytoplasmic. A helical membrane pass occupies residues 409 to 429 (AVATASNWLWNFLISFFTPFI). Over 430–436 (QASIGFK) the chain is Extracellular. A helical transmembrane segment spans residues 437-457 (YGYVFASCNLTGAIVIFLFAK). Residues 458–531 (ETKGLTLEEI…QYSSHEEDYA (74 aa)) lie on the Cytoplasmic side of the membrane. Residues 491–531 (KKVEKEKSRKGGARGESVEYVERASNTDSSPQYSSHEEDYA) form a disordered region. A phosphoserine mark is found at serine 507, serine 515, serine 519, and serine 520. The segment covering 514-524 (ASNTDSSPQYS) has biased composition (polar residues). Tyrosine 523 carries the post-translational modification Phosphotyrosine.

Belongs to the major facilitator superfamily. Sugar transporter (TC 2.A.1.1) family.

Its subcellular location is the membrane. Its function is as follows. High-affinity glucose transporter. In Schizosaccharomyces pombe (strain 972 / ATCC 24843) (Fission yeast), this protein is High-affinity glucose transporter ght2 (ght2).